The chain runs to 101 residues: Apolipoprotein C-II (101 aa).

Residues 1 to 22 (MGTRYFLVGFLILLVLGFEVQG) form the signal peptide. Residues 66-74 (AVDEKIRDI) form a lipid binding region. Residues 78-101 (STAAVTTYAGIITDQVFSVLSGKD) are lipoprotein lipase cofactor.

The protein belongs to the apolipoprotein C2 family. Proapolipoprotein C-II is synthesized as a sialic acid containing glycoprotein which is subsequently desialylated prior to its proteolytic processing. In terms of processing, proapolipoprotein C-II undergoes proteolytic cleavage of its N-terminal hexapeptide to generate apolipoprotein C-II. In bovine, proapolipoprotein C-II was found to be the minor form whereas apolipoprotein C-II was found to be the major form in plasma.

The protein resides in the secreted. Functionally, component of chylomicrons, very low-density lipoproteins (VLDL), low-density lipoproteins (LDL), and high-density lipoproteins (HDL) in plasma. Plays an important role in lipoprotein metabolism as an activator of lipoprotein lipase. Both proapolipoprotein C-II and apolipoprotein C-II can activate lipoprotein lipase. This Bos taurus (Bovine) protein is Apolipoprotein C-II (APOC2).